We begin with the raw amino-acid sequence, 108 residues long: Peptidyl-prolyl cis-trans isomerase FKBP1A (108 aa).

In terms of domain architecture, PPIase FKBP-type spans 20-108; that stretch reads GQTCVVHYTG…IFDVELLKLE (89 aa). At Lys-53 the chain carries N6-acetyllysine; alternate. Residue Lys-53 is modified to N6-succinyllysine; alternate.

This sequence belongs to the FKBP-type PPIase family. FKBP1 subfamily. Interacts with TGFBR1; prevents TGFBR1 phosphorylation by TGFBR2 and stabilizes it in the inactive conformation. Interacts with ACVR1B and SMAD7. Identified in a complex composed of RYR1, PDE4D, PKA, FKBP1A and protein phosphatase 1 (PP1). Interacts directly with RYR2 and RYR3. Interacts with GLMN; rapamycin and FK506 abolish the interaction with GLMN in a dose dependent manner. Interacts directly with RYR1.

The protein resides in the cytoplasm. It localises to the cytosol. The protein localises to the sarcoplasmic reticulum membrane. It carries out the reaction [protein]-peptidylproline (omega=180) = [protein]-peptidylproline (omega=0). Its activity is regulated as follows. Inhibited by both FK506 and rapamycin. Keeps in an inactive conformation TGFBR1, the TGF-beta type I serine/threonine kinase receptor, preventing TGF-beta receptor activation in absence of ligand. May modulate the RYR1 calcium channel activity. PPIases accelerate the folding of proteins. It catalyzes the cis-trans isomerization of proline imidic peptide bonds in oligopeptides. In Bos taurus (Bovine), this protein is Peptidyl-prolyl cis-trans isomerase FKBP1A (FKBP1A).